Here is a 406-residue protein sequence, read N- to C-terminus: Arginine deiminase (406 aa).

Cysteine 396 serves as the catalytic Amidino-cysteine intermediate.

The protein belongs to the arginine deiminase family.

It localises to the cytoplasm. The catalysed reaction is L-arginine + H2O = L-citrulline + NH4(+). The protein operates within amino-acid degradation; L-arginine degradation via ADI pathway; carbamoyl phosphate from L-arginine: step 1/2. The protein is Arginine deiminase of Aliivibrio salmonicida (strain LFI1238) (Vibrio salmonicida (strain LFI1238)).